A 403-amino-acid polypeptide reads, in one-letter code: Glyceraldehyde-3-phosphate dehydrogenase A, chloroplastic (403 aa).

Residues 1–66 constitute a chloroplast transit peptide; it reads MASSMLSATT…GGPRRAPTEA (66 aa). Residues 77 to 78, aspartate 102, and arginine 147 each bind NADP(+); that span reads RI. D-glyceraldehyde 3-phosphate is bound by residues 219-221, threonine 250, arginine 265, 278-279, and arginine 301; these read SCT and TG. Cysteine 220 serves as the catalytic Nucleophile. Asparagine 383 provides a ligand contact to NADP(+).

This sequence belongs to the glyceraldehyde-3-phosphate dehydrogenase family. In terms of assembly, tetramer of either four A chains (GAPDH 2) or two A and two B chains (GAPDH 1).

It localises to the plastid. It is found in the chloroplast. It carries out the reaction D-glyceraldehyde 3-phosphate + phosphate + NADP(+) = (2R)-3-phospho-glyceroyl phosphate + NADPH + H(+). Its pathway is carbohydrate biosynthesis; Calvin cycle. The polypeptide is Glyceraldehyde-3-phosphate dehydrogenase A, chloroplastic (GAPA) (Zea mays (Maize)).